The chain runs to 297 residues: Formamidopyrimidine-DNA glycosylase (297 aa).

Proline 2 acts as the Schiff-base intermediate with DNA in catalysis. Residue glutamate 3 is the Proton donor of the active site. Residue lysine 61 is the Proton donor; for beta-elimination activity of the active site. Positions 120 and 176 each coordinate DNA. An FPG-type zinc finger spans residues 262-296; that stretch reads HVYGRQGQPCDRCGTAIVRESFMNRGSHFCPRCQR. Residue arginine 286 is the Proton donor; for delta-elimination activity of the active site.

Belongs to the FPG family. Monomer. Zn(2+) serves as cofactor.

It carries out the reaction Hydrolysis of DNA containing ring-opened 7-methylguanine residues, releasing 2,6-diamino-4-hydroxy-5-(N-methyl)formamidopyrimidine.. The enzyme catalyses 2'-deoxyribonucleotide-(2'-deoxyribose 5'-phosphate)-2'-deoxyribonucleotide-DNA = a 3'-end 2'-deoxyribonucleotide-(2,3-dehydro-2,3-deoxyribose 5'-phosphate)-DNA + a 5'-end 5'-phospho-2'-deoxyribonucleoside-DNA + H(+). Functionally, involved in base excision repair of DNA damaged by oxidation or by mutagenic agents. Acts as a DNA glycosylase that recognizes and removes damaged bases. Has a preference for oxidized purines, such as 7,8-dihydro-8-oxoguanine (8-oxoG). Has AP (apurinic/apyrimidinic) lyase activity and introduces nicks in the DNA strand. Cleaves the DNA backbone by beta-delta elimination to generate a single-strand break at the site of the removed base with both 3'- and 5'-phosphates. The sequence is that of Formamidopyrimidine-DNA glycosylase from Leifsonia xyli subsp. xyli (strain CTCB07).